The sequence spans 854 residues: pH-response regulator protein palA/prr-1 (854 aa).

In terms of domain architecture, BRO1 spans 5–402 (HVLSLPFRKS…SELESMTSQL (398 aa)). A coiled-coil region spans residues 632 to 699 (RLDRLYESEL…DAAYYKYKEI (68 aa)). 2 disordered regions span residues 739-782 (EEEI…EPIQ) and 801-854 (PQQQ…IRFG). The span at 746–759 (PLSSLNMHQSSFSY) shows a compositional bias: polar residues. Over residues 767–782 (QPPPPPPQIPFPEPIQ) the composition is skewed to pro residues. Residues 827-839 (QGQQHQQEQGQPG) show a composition bias toward low complexity.

The protein belongs to the palA/RIM20 family. Interacts with pacc-1 by binding to its two YPX[LI] motifs.

Its function is as follows. Required for the proteolytic cleavage of the transcription factor pacc-1 in response to alkaline ambient pH. May act as a scaffold protein that recruits the calpain-like protease palB/cpr-8 via snf7/vps-3 to its substrate pacc-1. This Neurospora crassa (strain ATCC 24698 / 74-OR23-1A / CBS 708.71 / DSM 1257 / FGSC 987) protein is pH-response regulator protein palA/prr-1 (prr-1).